The following is a 96-amino-acid chain: Large ribosomal subunit protein bL25 (96 aa).

The protein belongs to the bacterial ribosomal protein bL25 family. Part of the 50S ribosomal subunit; part of the 5S rRNA/L5/L18/L25 subcomplex. Contacts the 5S rRNA. Binds to the 5S rRNA independently of L5 and L18.

This is one of the proteins that binds to the 5S RNA in the ribosome where it forms part of the central protuberance. The polypeptide is Large ribosomal subunit protein bL25 (Francisella tularensis subsp. holarctica (strain FTNF002-00 / FTA)).